A 364-amino-acid polypeptide reads, in one-letter code: Solute carrier family 35 member C2 (364 aa).

2 consecutive transmembrane segments (helical) span residues 14–34 (AALTLGLVLLYYCFSIGITFY) and 42–62 (FHFPLFMTMLHLAVIFLFSAL). Residue Asn102 is glycosylated (N-linked (GlcNAc...) asparagine). Transmembrane regions (helical) follow at residues 104 to 124 (SFLYITVSLYTMTKSSAVLFI), 136 to 156 (LRAALVLVVLLIAGGLFMFTY), 166 to 186 (FALVLGASFIGGIRWTLTQIL), 202 to 222 (FHLQPLMFLGLFPLFAIFEGL), 238 to 258 (LLLWVLGSLLLGGILAFGLGF), 272 to 292 (LSIAGIFKEVCTLLLAAHLLG), and 295 to 315 (ISLLNWLGFALCLSGISLHVA). A phosphoserine mark is found at Ser335 and Ser336.

It belongs to the TPT transporter family. SLC35C subfamily.

The protein resides in the golgi apparatus. It localises to the cis-Golgi network membrane. The protein localises to the endoplasmic reticulum-Golgi intermediate compartment membrane. In terms of biological role, may play an important role in the cellular response to tissue hypoxia. May be either a GDP-fucose transporter that competes with SLC35C1 for GDP-fucose, or a factor that otherwise enhances the fucosylation of Notch and is required for optimal Notch signaling in mammalian cells. The protein is Solute carrier family 35 member C2 (Slc35c2) of Mus musculus (Mouse).